A 332-amino-acid chain; its full sequence is L-lactate dehydrogenase A chain (332 aa).

NAD(+) contacts are provided by residues 29-57 and arginine 99; that span reads GMVGMASAVSILLKDLCDELALVDVMEDK. Residues arginine 106, asparagine 138, and arginine 169 each contribute to the substrate site. Asparagine 138 is an NAD(+) binding site. The active-site Proton acceptor is histidine 193. Threonine 248 serves as a coordination point for substrate.

Belongs to the LDH/MDH superfamily. LDH family. In terms of assembly, homotetramer.

The protein localises to the cytoplasm. The catalysed reaction is (S)-lactate + NAD(+) = pyruvate + NADH + H(+). Its pathway is fermentation; pyruvate fermentation to lactate; (S)-lactate from pyruvate: step 1/1. Its function is as follows. Interconverts simultaneously and stereospecifically pyruvate and lactate with concomitant interconversion of NADH and NAD(+). This is L-lactate dehydrogenase A chain (ldha) from Sphyraena idiastes (Pelican barracuda).